A 152-amino-acid chain; its full sequence is MDLDSPLFNTLHHIMDLTDDTTEKNLNAPTRTYVRDAKAMAATPADVKEHPNSYVFMVDMPGVKSGDIKVQVEDENVLLISGERKREEEKEGVKYLKMERRIGKLMRKFVLPENANIEAISAISQDGVLTVTVNKLPPPEPKKPKTIQVKVA.

The sHSP domain maps to 36–152; the sequence is DAKAMAATPA…KPKTIQVKVA (117 aa).

This sequence belongs to the small heat shock protein (HSP20) family.

The protein resides in the cytoplasm. The sequence is that of 17.1 kDa class II heat shock protein (HSP17.7) from Pisum sativum (Garden pea).